The primary structure comprises 593 residues: PiggyBac transposable element-derived protein 3 (593 aa).

Disordered regions lie at residues 27-53 and 69-105; these read IQPP…INNL and SDAE…SRRR. Residues 38–47 show a composition bias toward acidic residues; it reads SDEESGDEEG. Position 86 is a phosphoserine (S86).

As to expression, expressed in heart and oocytes, but not in granulosa cells (at protein level).

It is found in the nucleus. Binds in vitro to PGBD3-related transposable elements, called MER85s; these non-autonomous 140 bp elements are characterized by the presence of PGBD3 terminal inverted repeats and the absence of internal transposase ORF. The polypeptide is PiggyBac transposable element-derived protein 3 (PGBD3) (Homo sapiens (Human)).